A 508-amino-acid polypeptide reads, in one-letter code: ATP synthase subunit alpha (508 aa).

Residue 169-176 (GDRGTGKS) participates in ATP binding.

This sequence belongs to the ATPase alpha/beta chains family. F-type ATPases have 2 components, CF(1) - the catalytic core - and CF(0) - the membrane proton channel. CF(1) has five subunits: alpha(3), beta(3), gamma(1), delta(1), epsilon(1). CF(0) has three main subunits: a(1), b(2) and c(9-12). The alpha and beta chains form an alternating ring which encloses part of the gamma chain. CF(1) is attached to CF(0) by a central stalk formed by the gamma and epsilon chains, while a peripheral stalk is formed by the delta and b chains.

It is found in the cell membrane. It carries out the reaction ATP + H2O + 4 H(+)(in) = ADP + phosphate + 5 H(+)(out). Produces ATP from ADP in the presence of a proton gradient across the membrane. The alpha chain is a regulatory subunit. This is ATP synthase subunit alpha from Natranaerobius thermophilus (strain ATCC BAA-1301 / DSM 18059 / JW/NM-WN-LF).